The sequence spans 567 residues: Dihydroxy-acid dehydratase (567 aa).

Cys57 is a binding site for [2Fe-2S] cluster. Asp89 is a Mg(2+) binding site. Position 130 (Cys130) interacts with [2Fe-2S] cluster. Asp131 and Lys132 together coordinate Mg(2+). Lys132 carries the N6-carboxylysine modification. Cys202 contributes to the [2Fe-2S] cluster binding site. Mg(2+) is bound at residue Glu453. Residue Ser479 is the Proton acceptor of the active site.

It belongs to the IlvD/Edd family. As to quaternary structure, homodimer. Requires [2Fe-2S] cluster as cofactor. The cofactor is Mg(2+).

It catalyses the reaction (2R)-2,3-dihydroxy-3-methylbutanoate = 3-methyl-2-oxobutanoate + H2O. The catalysed reaction is (2R,3R)-2,3-dihydroxy-3-methylpentanoate = (S)-3-methyl-2-oxopentanoate + H2O. Its pathway is amino-acid biosynthesis; L-isoleucine biosynthesis; L-isoleucine from 2-oxobutanoate: step 3/4. It functions in the pathway amino-acid biosynthesis; L-valine biosynthesis; L-valine from pyruvate: step 3/4. Its function is as follows. Functions in the biosynthesis of branched-chain amino acids. Catalyzes the dehydration of (2R,3R)-2,3-dihydroxy-3-methylpentanoate (2,3-dihydroxy-3-methylvalerate) into 2-oxo-3-methylpentanoate (2-oxo-3-methylvalerate) and of (2R)-2,3-dihydroxy-3-methylbutanoate (2,3-dihydroxyisovalerate) into 2-oxo-3-methylbutanoate (2-oxoisovalerate), the penultimate precursor to L-isoleucine and L-valine, respectively. The protein is Dihydroxy-acid dehydratase of Nocardioides sp. (strain ATCC BAA-499 / JS614).